We begin with the raw amino-acid sequence, 513 residues long: Xylose import ATP-binding protein XylG (513 aa).

ABC transporter domains lie at leucine 5 to glutamate 242 and leucine 259 to glutamate 505. Residue glycine 37–serine 44 coordinates ATP.

This sequence belongs to the ABC transporter superfamily. Xylose importer (TC 3.A.1.2.4) family. In terms of assembly, the complex is composed of two ATP-binding proteins (XylG), two transmembrane proteins (XylH) and a solute-binding protein (XylF).

It is found in the cell inner membrane. The enzyme catalyses D-xylose(out) + ATP + H2O = D-xylose(in) + ADP + phosphate + H(+). Functionally, part of the ABC transporter complex XylFGH involved in xylose import. Responsible for energy coupling to the transport system. This is Xylose import ATP-binding protein XylG from Shigella boydii serotype 4 (strain Sb227).